The chain runs to 614 residues: Baeyer-Villiger monooxygenase peniC (614 aa).

FAD-binding positions include Glu-99, 107 to 110, Asp-119, and Tyr-125; that span reads TWHW. Residues 255-261, 278-279, and 398-399 contribute to the NADP(+) site; these read TGASGVQ, RT, and KR.

It belongs to the FAD-binding monooxygenase family. FAD is required as a cofactor.

The enzyme catalyses gamma-lactone-2-keto[5.5.5.5]fenestrane + NADPH + O2 + H(+) = penifulvin A + NADP(+) + H2O. It functions in the pathway secondary metabolite biosynthesis; terpenoid biosynthesis. Baeyer-Villiger monooxygenase; part of the gene cluster that mediates the biosynthesis of penifulvin A, a potent insecticidal sesquiterpene that features a [5.5.5.6]dioxafenestrane ring. Within the pathway, peniC is responsible for the final regioselective Baeyer-Villiger oxidation of gamma-lactone-2-keto[5.5.5.5]fenestran between C1 and C2 to form the delta-lactone moiety of penifulvin A. The first step of the pathway is performed by the sesquiterpene cyclase peniA that generates the angular triquinane scaffold silphinene via cyclization of the linear farnesyl pyrophosphate (FPP). The cytochrome P450 monooxygenase peniB and the flavin-dependent monooxygenase peniC then catalyze a series of oxidation reactions to transform silphinene into penifulvin A. The protein is Baeyer-Villiger monooxygenase peniC of Penicillium patulum (Penicillium griseofulvum).